The following is a 295-amino-acid chain: 33 kDa chaperonin (295 aa).

Disulfide bonds link C237/C239 and C270/C273.

This sequence belongs to the HSP33 family. In terms of processing, under oxidizing conditions two disulfide bonds are formed involving the reactive cysteines. Under reducing conditions zinc is bound to the reactive cysteines and the protein is inactive.

The protein resides in the cytoplasm. Functionally, redox regulated molecular chaperone. Protects both thermally unfolding and oxidatively damaged proteins from irreversible aggregation. Plays an important role in the bacterial defense system toward oxidative stress. The sequence is that of 33 kDa chaperonin from Geobacillus sp. (strain WCH70).